The primary structure comprises 211 residues: ATP-dependent Clp protease proteolytic subunit (211 aa).

Ser-106 functions as the Nucleophile in the catalytic mechanism. The active site involves His-131.

It belongs to the peptidase S14 family. Fourteen ClpP subunits assemble into 2 heptameric rings which stack back to back to give a disk-like structure with a central cavity, resembling the structure of eukaryotic proteasomes.

It localises to the cytoplasm. The catalysed reaction is Hydrolysis of proteins to small peptides in the presence of ATP and magnesium. alpha-casein is the usual test substrate. In the absence of ATP, only oligopeptides shorter than five residues are hydrolyzed (such as succinyl-Leu-Tyr-|-NHMec, and Leu-Tyr-Leu-|-Tyr-Trp, in which cleavage of the -Tyr-|-Leu- and -Tyr-|-Trp bonds also occurs).. Functionally, cleaves peptides in various proteins in a process that requires ATP hydrolysis. Has a chymotrypsin-like activity. Plays a major role in the degradation of misfolded proteins. This chain is ATP-dependent Clp protease proteolytic subunit, found in Maricaulis maris (strain MCS10) (Caulobacter maris).